A 480-amino-acid polypeptide reads, in one-letter code: V-type ATP synthase beta chain 2 (480 aa).

It belongs to the ATPase alpha/beta chains family.

In terms of biological role, produces ATP from ADP in the presence of a proton gradient across the membrane. The V-type beta chain is a regulatory subunit. The protein is V-type ATP synthase beta chain 2 (atpB2) of Treponema pallidum (strain Nichols).